Here is a 465-residue protein sequence, read N- to C-terminus: Kinesin-like protein KIN-1 (465 aa).

Positions 3–334 (NVTVCARFRP…LRFGMRAKHI (332 aa)) constitute a Kinesin motor domain. Position 87 to 94 (87 to 94 (GQTGAGKT)) interacts with ATP. Positions 338–358 (PRASEVKSAKAQEEPSSVTKD) are disordered. Residues 341-358 (SEVKSAKAQEEPSSVTKD) are compositionally biased toward basic and acidic residues. Residues 402–444 (VYEDIVSKTIQSLQQAVDELQQKVKKLEAENIGIQEQALRNHE) adopt a coiled-coil conformation.

It belongs to the TRAFAC class myosin-kinesin ATPase superfamily. Kinesin family. KIN-1 subfamily. As to quaternary structure, homodimer. Interacts with WIP1 and WIP2. Specifically expressed in ovules and anthers.

Kinesin-like motor protein that promotes synapsis and is required for proper crossover distribution in meiosis. Plays a role in the nuclear division cycles during megagametogenesis. This is Kinesin-like protein KIN-1 from Arabidopsis thaliana (Mouse-ear cress).